A 73-amino-acid polypeptide reads, in one-letter code: Potassium channel toxin alpha-KTx 27.1 (73 aa).

Positions 1-23 (MKFLFLTLFVCCFIAVLVIPSEA) are cleaved as a signal peptide.

Belongs to the short scorpion toxin superfamily. Potassium channel inhibitor family. Alpha-KTx 27 subfamily. Contains 4 disulfide bonds. Expressed by the venom gland.

The protein localises to the secreted. The polypeptide is Potassium channel toxin alpha-KTx 27.1 (Buthus israelis (Israeli scorpion)).